The chain runs to 579 residues: Acetolactate synthase (579 aa).

Glu-61 serves as a coordination point for thiamine diphosphate. FAD is bound by residues Arg-163, 274 to 295, and 317 to 336; these read HGTA…VGVR and DIDP…IVGD. The tract at residues 408–487 is thiamine pyrophosphate binding; it reads QHQMWAGQFV…VKVIILNNGW (80 aa). Residues Asp-458 and Asn-485 each coordinate Mg(2+).

It belongs to the TPP enzyme family. Mg(2+) serves as cofactor. The cofactor is thiamine diphosphate.

The enzyme catalyses 2 pyruvate + H(+) = (2S)-2-acetolactate + CO2. Its pathway is amino-acid biosynthesis; L-isoleucine biosynthesis; L-isoleucine from 2-oxobutanoate: step 1/4. It functions in the pathway amino-acid biosynthesis; L-valine biosynthesis; L-valine from pyruvate: step 1/4. This is Acetolactate synthase (ilvY) from Arthrospira platensis (Spirulina platensis).